A 171-amino-acid polypeptide reads, in one-letter code: MTKQHAFTREDLLRCSRGELFGPGNAQLPAPNMLMVDRITHISEEGGKFGKGELVAELDINPDLWFFACHFEGDPVMPGCLGLDAMWQLVGFYLGWQGNPGRGRALGSGEVKFFGQVLPTAKKVTYNIQIKRTMRGKLVLAIAEGTVSVDGREIYSAEGLRVGLFTSTENF.

His-70 is a catalytic residue.

The protein belongs to the thioester dehydratase family. FabA subfamily. Homodimer.

The protein resides in the cytoplasm. The enzyme catalyses a (3R)-hydroxyacyl-[ACP] = a (2E)-enoyl-[ACP] + H2O. The catalysed reaction is (3R)-hydroxydecanoyl-[ACP] = (2E)-decenoyl-[ACP] + H2O. It carries out the reaction (2E)-decenoyl-[ACP] = (3Z)-decenoyl-[ACP]. Its pathway is lipid metabolism; fatty acid biosynthesis. Necessary for the introduction of cis unsaturation into fatty acids. Catalyzes the dehydration of (3R)-3-hydroxydecanoyl-ACP to E-(2)-decenoyl-ACP and then its isomerization to Z-(3)-decenoyl-ACP. Can catalyze the dehydratase reaction for beta-hydroxyacyl-ACPs with saturated chain lengths up to 16:0, being most active on intermediate chain length. In Pseudomonas syringae pv. tomato (strain ATCC BAA-871 / DC3000), this protein is 3-hydroxydecanoyl-[acyl-carrier-protein] dehydratase.